A 211-amino-acid polypeptide reads, in one-letter code: Dof zinc finger protein 5 (211 aa).

A disordered region spans residues 37–101 (FVVAREKVEP…QRRLQDSAEA (65 aa)). Residues 68 to 80 (IKREAADRDEEQR) show a composition bias toward basic and acidic residues. The Dof-type zinc finger occupies 109-163 (LPCPRCRSRDTKFCYFNNYNVNQPRHFCKACHRYWTAGGALRNVPVGAGRRKNRP). Zn(2+)-binding residues include Cys-111, Cys-114, Cys-136, and Cys-139. Residues 191-211 (SPTSPSPVYTDRWPVTPDRPF) form a disordered region.

The protein resides in the nucleus. Its function is as follows. Transcription factor that may transactivate seed storage protein genes in developing seeds. The sequence is that of Dof zinc finger protein 5 from Oryza sativa subsp. japonica (Rice).